The primary structure comprises 159 residues: NADH-quinone oxidoreductase subunit B (159 aa).

[4Fe-4S] cluster contacts are provided by C36, C37, C102, and C132.

It belongs to the complex I 20 kDa subunit family. In terms of assembly, NDH-1 is composed of 14 different subunits. Subunits NuoB, C, D, E, F, and G constitute the peripheral sector of the complex. The cofactor is [4Fe-4S] cluster.

The protein localises to the cell inner membrane. It carries out the reaction a quinone + NADH + 5 H(+)(in) = a quinol + NAD(+) + 4 H(+)(out). In terms of biological role, NDH-1 shuttles electrons from NADH, via FMN and iron-sulfur (Fe-S) centers, to quinones in the respiratory chain. Couples the redox reaction to proton translocation (for every two electrons transferred, four hydrogen ions are translocated across the cytoplasmic membrane), and thus conserves the redox energy in a proton gradient. The polypeptide is NADH-quinone oxidoreductase subunit B (Verminephrobacter eiseniae (strain EF01-2)).